A 631-amino-acid chain; its full sequence is Probable G-protein coupled receptor 153 (631 aa).

Residues 1–11 are Extracellular-facing; it reads MSDERRLPSSA. A helical membrane pass occupies residues 12-32; sequence VGWLACGGLSLLANAWGILSV. At 33 to 41 the chain is on the cytoplasmic side; it reads GAKQKKWKP. The chain crosses the membrane as a helical span at residues 42 to 62; it reads LEFLLCTLAATHMLNVAVPIA. Residues 63–84 lie on the Extracellular side of the membrane; sequence TYAVVQLRRQRPDYEWNEGLCK. A helical transmembrane segment spans residues 85–105; it reads VFVSTFYTLTLATCFSVTSIS. Over 106–126 the chain is Cytoplasmic; that stretch reads YHRMWMVRWPVNYRLSNAKKQ. Residues 127 to 147 traverse the membrane as a helical segment; the sequence is AVHTVMGIWMVSFILSALPAV. Over 148–162 the chain is Extracellular; that stretch reads GWHDTSERFYTHGCR. Residues 163–183 form a helical membrane-spanning segment; sequence FIVAEIGLGFGVCFLLLVGGS. Over 184 to 243 the chain is Cytoplasmic; sequence VAMGMVCTAIALFQTLATQVGHRADRRTFTVPTIVVEDAQGKRRSSIDGSEPARTSLQIT. A helical transmembrane segment spans residues 244-264; the sequence is GLVATIVVIYDCLMGFPVLVV. The Extracellular portion of the chain corresponds to 265 to 276; sequence SFSSLRADASAP. A helical membrane pass occupies residues 277 to 297; sequence WMALCVLWCSVTQALLLPLFL. The Cytoplasmic segment spans residues 298–631; the sequence is WTCDRYRADL…LHSDSLGSAS (334 aa). 3 disordered regions span residues 486-518, 546-590, and 603-631; these read LQPSSLDGGPRHAQDSPPGSPRRRPGPGARSAS, QPFP…SLSA, and CGSISSFLSSPSESSGYVTLHSDSLGSAS. Positions 605 to 617 are enriched in low complexity; the sequence is SISSFLSSPSESS.

It belongs to the G-protein coupled receptor 1 family.

Its subcellular location is the cell membrane. In terms of biological role, orphan receptor. The protein is Probable G-protein coupled receptor 153 (Gpr153) of Mus musculus (Mouse).